The chain runs to 357 residues: Chorismate synthase (357 aa).

The NADP(+) site is built by arginine 48 and arginine 54. FMN is bound by residues 125–127 (RSS), 243–244 (NA), glycine 283, 298–302 (KPTSS), and arginine 324.

It belongs to the chorismate synthase family. Homotetramer. FMNH2 serves as cofactor.

The catalysed reaction is 5-O-(1-carboxyvinyl)-3-phosphoshikimate = chorismate + phosphate. The protein operates within metabolic intermediate biosynthesis; chorismate biosynthesis; chorismate from D-erythrose 4-phosphate and phosphoenolpyruvate: step 7/7. Catalyzes the anti-1,4-elimination of the C-3 phosphate and the C-6 proR hydrogen from 5-enolpyruvylshikimate-3-phosphate (EPSP) to yield chorismate, which is the branch point compound that serves as the starting substrate for the three terminal pathways of aromatic amino acid biosynthesis. This reaction introduces a second double bond into the aromatic ring system. The chain is Chorismate synthase from Pasteurella multocida (strain Pm70).